Reading from the N-terminus, the 625-residue chain is Probable potassium transport system protein Kup 2 (625 aa).

Transmembrane regions (helical) follow at residues 10-30 (LAAL…TSPL), 47-67 (GVHL…VVTL), 104-124 (VLLL…VITP), 140-160 (PAFK…LFAV), 172-192 (FGPV…AEII), 214-234 (GWHM…VEAL), 250-270 (WLGL…ALLM), 283-303 (LFPQ…TVIA), 347-367 (WLLL…SALA), 369-389 (AYGI…FFVV), 396-416 (PLPV…LLVV), and 422-442 (FFQG…VMAT).

This sequence belongs to the HAK/KUP transporter (TC 2.A.72) family.

The protein resides in the cell inner membrane. The catalysed reaction is K(+)(in) + H(+)(in) = K(+)(out) + H(+)(out). Its function is as follows. Transport of potassium into the cell. Likely operates as a K(+):H(+) symporter. The sequence is that of Probable potassium transport system protein Kup 2 from Albidiferax ferrireducens (strain ATCC BAA-621 / DSM 15236 / T118) (Rhodoferax ferrireducens).